A 795-amino-acid polypeptide reads, in one-letter code: Forkhead box protein P4 (795 aa).

Residues 1 to 25 are compositionally biased toward polar residues; that stretch reads MMVESASETIRSAPSGQNGVGSLSA. Positions 1–62 are disordered; that stretch reads MMVESASETI…SGGADSNGEM (62 aa). The span at 36–45 shows a compositional bias: low complexity; the sequence is AGTAPAAGRD. Phosphoserine is present on residues S58 and S92. A Glycyl lysine isopeptide (Lys-Gly) (interchain with G-Cter in SUMO2) cross-link involves residue K181. Disordered regions lie at residues 233–252 and 265–310; these read PQLW…SGRQ and TSFA…PLYG. The segment covering 292-303 has biased composition (basic and acidic residues); it reads SRRDSSSHEETP. The segment at 312 to 337 adopts a C2H2-type zinc-finger fold; sequence GECKWPGCETLCEDLGQFIKHLNTEH. A leucine-zipper region spans residues 354–375; it reads VQQLEIQLAKESERLQAMMAHL. The disordered stretch occupies residues 379–437; that stretch reads PSEPKPFSQPVTVSADPFPDGLVHPPTSAAAPVTPLRPPGLGSASLHSGGPARRRSNDK. A Glycyl lysine isopeptide (Lys-Gly) (interchain with G-Cter in SUMO2) cross-link involves residue K383. The segment at residues 459–549 is a DNA-binding region (fork-head); the sequence is RPPFTYASLI…PPKMTGSPTL (91 aa). S546 carries the post-translational modification Phosphoserine. The segment at 589–671 is disordered; it reads ASSLLPLSQE…LEEDLGGEDM (83 aa). The segment covering 609-627 has biased composition (polar residues); the sequence is SNGSSSPPRLSPPQYSHQI. Over residues 628–642 the composition is skewed to basic and acidic residues; that stretch reads QVKEEPAEAEEDRRP.

In terms of assembly, forms homodimers and heterodimers with FOXP1 and FOXP2. Dimerization is required for DNA-binding. Expressed in the adult heart, brain, spleen lung, liver, kidney and testes.

It is found in the nucleus. Functionally, transcriptional repressor that represses lung-specific expression. The sequence is that of Forkhead box protein P4 from Mus musculus (Mouse).